Consider the following 328-residue polypeptide: Dihydroorotate dehydrogenase (quinone), mitochondrial (328 aa).

Residues 21 to 38 (AHGLSIAGLKTGLVTGSA) form a helical membrane-spanning segment. FMN contacts are provided by residues 61–65 (AGYDK) and Thr-85. Lys-65 contributes to the substrate binding site. 110–114 (NRLGF) contacts substrate. 2 residues coordinate FMN: Asn-139 and Asn-170. Position 170–175 (170–175 (NISSPN)) interacts with substrate. Catalysis depends on Ser-173, which acts as the Nucleophile. Residues Lys-215 and Ser-243 each coordinate FMN. A substrate-binding site is contributed by 244–245 (NT). Gly-266 and Gly-295 together coordinate FMN.

Belongs to the dihydroorotate dehydrogenase family. Type 2 subfamily. It depends on FMN as a cofactor.

It is found in the mitochondrion inner membrane. The enzyme catalyses (S)-dihydroorotate + a quinone = orotate + a quinol. Its pathway is pyrimidine metabolism; UMP biosynthesis via de novo pathway; orotate from (S)-dihydroorotate (quinone route): step 1/1. In terms of biological role, catalyzes the conversion of dihydroorotate to orotate with quinone as electron acceptor. In Cyclocybe aegerita (Black poplar mushroom), this protein is Dihydroorotate dehydrogenase (quinone), mitochondrial (URA1).